A 282-amino-acid polypeptide reads, in one-letter code: NADPH-dependent 7-cyano-7-deazaguanine reductase (282 aa).

Position 90-92 (90-92) interacts with substrate; the sequence is IES. 92-93 is a binding site for NADPH; it reads SK. Cys-190 acts as the Thioimide intermediate in catalysis. Asp-197 functions as the Proton donor in the catalytic mechanism. Position 229–230 (229–230) interacts with substrate; the sequence is HE. 258 to 259 serves as a coordination point for NADPH; that stretch reads RG.

The protein belongs to the GTP cyclohydrolase I family. QueF type 2 subfamily. In terms of assembly, homodimer.

It localises to the cytoplasm. The enzyme catalyses 7-aminomethyl-7-carbaguanine + 2 NADP(+) = 7-cyano-7-deazaguanine + 2 NADPH + 3 H(+). It participates in tRNA modification; tRNA-queuosine biosynthesis. Its function is as follows. Catalyzes the NADPH-dependent reduction of 7-cyano-7-deazaguanine (preQ0) to 7-aminomethyl-7-deazaguanine (preQ1). The chain is NADPH-dependent 7-cyano-7-deazaguanine reductase from Aeromonas salmonicida (strain A449).